We begin with the raw amino-acid sequence, 143 residues long: Transcription antitermination protein NusB (143 aa).

This sequence belongs to the NusB family.

Involved in transcription antitermination. Required for transcription of ribosomal RNA (rRNA) genes. Binds specifically to the boxA antiterminator sequence of the ribosomal RNA (rrn) operons. The polypeptide is Transcription antitermination protein NusB (Anaeromyxobacter sp. (strain Fw109-5)).